A 268-amino-acid polypeptide reads, in one-letter code: MERYESLFAQLKERKEGAFVPFVTLGDPGIEQSLKIIDTLIEAGADTLELGIPFSDPLADGPTIQNATLRAFAAGVTPAQCFEMLALIRQKHPTIPIGLLMYANLVFNKGIDEFYAQCEKVGVDSVLVADVPVEESAPFRQAALRHNVAPIFICPPNADDDLLRQIASYGRGYTYLLSRAGVTGAENRAALPLNHLVAKLKEYNAAPPLQGFGISAPDQVKAAIDAGAAGAISGSAIVKIIEQHINEPKKMLAALKAFVQPMKAATRS.

Residues Glu49 and Asp60 each act as proton acceptor in the active site.

This sequence belongs to the TrpA family. As to quaternary structure, tetramer of two alpha and two beta chains.

It carries out the reaction (1S,2R)-1-C-(indol-3-yl)glycerol 3-phosphate + L-serine = D-glyceraldehyde 3-phosphate + L-tryptophan + H2O. Its pathway is amino-acid biosynthesis; L-tryptophan biosynthesis; L-tryptophan from chorismate: step 5/5. Its function is as follows. The alpha subunit is responsible for the aldol cleavage of indoleglycerol phosphate to indole and glyceraldehyde 3-phosphate. The sequence is that of Tryptophan synthase alpha chain from Escherichia coli O157:H7.